The chain runs to 399 residues: Tryptophan synthase beta chain (399 aa).

K92 is subject to N6-(pyridoxal phosphate)lysine.

It belongs to the TrpB family. Tetramer of two alpha and two beta chains. The cofactor is pyridoxal 5'-phosphate.

The enzyme catalyses (1S,2R)-1-C-(indol-3-yl)glycerol 3-phosphate + L-serine = D-glyceraldehyde 3-phosphate + L-tryptophan + H2O. It participates in amino-acid biosynthesis; L-tryptophan biosynthesis; L-tryptophan from chorismate: step 5/5. Functionally, the beta subunit is responsible for the synthesis of L-tryptophan from indole and L-serine. The protein is Tryptophan synthase beta chain of Nitrosomonas eutropha (strain DSM 101675 / C91 / Nm57).